Consider the following 446-residue polypeptide: Mitochondrial distribution and morphology protein 12 (446 aa).

Residues 1 to 446 (MSIDINWEAA…VYPSFWTFLV (446 aa)) form the SMP-LTD domain. Positions 75-85 (DNEIGDGEVSD) are enriched in acidic residues. Disordered regions lie at residues 75–106 (DNEIGDGEVSDIQDRSPKPRPSSAGNERSAAD), 126–145 (PHDVPIPSKEDPLASRPIRS), and 188–283 (TPLS…RVRE). Over residues 126–138 (PHDVPIPSKEDPL) the composition is skewed to basic and acidic residues. Polar residues predominate over residues 233–246 (TGNSRPSTADTLDS). Basic and acidic residues predominate over residues 260–274 (SSDDAHPNVLPRRDN).

This sequence belongs to the MDM12 family. As to quaternary structure, component of the ER-mitochondria encounter structure (ERMES) or MDM complex, composed of MMM1, MDM10, MDM12 and MDM34. An MMM1 homodimer associates with one molecule of MDM12 on each side in a pairwise head-to-tail manner, and the SMP-LTD domains of MMM1 and MDM12 generate a continuous hydrophobic tunnel for phospholipid trafficking.

The protein localises to the mitochondrion outer membrane. It is found in the endoplasmic reticulum membrane. Component of the ERMES/MDM complex, which serves as a molecular tether to connect the endoplasmic reticulum (ER) and mitochondria. Components of this complex are involved in the control of mitochondrial shape and protein biogenesis, and function in nonvesicular lipid trafficking between the ER and mitochondria. MDM12 is required for the interaction of the ER-resident membrane protein MMM1 and the outer mitochondrial membrane-resident beta-barrel protein MDM10. The MDM12-MMM1 subcomplex functions in the major beta-barrel assembly pathway that is responsible for biogenesis of all mitochondrial outer membrane beta-barrel proteins, and acts in a late step after the SAM complex. The MDM10-MDM12-MMM1 subcomplex further acts in the TOM40-specific pathway after the action of the MDM12-MMM1 complex. Essential for establishing and maintaining the structure of mitochondria and maintenance of mtDNA nucleoids. The sequence is that of Mitochondrial distribution and morphology protein 12 from Coccidioides immitis (strain RS) (Valley fever fungus).